A 307-amino-acid polypeptide reads, in one-letter code: UDP-3-O-acyl-N-acetylglucosamine deacetylase (307 aa).

Positions 78, 237, and 241 each coordinate Zn(2+). The active-site Proton donor is the His264.

The protein belongs to the LpxC family. It depends on Zn(2+) as a cofactor.

The catalysed reaction is a UDP-3-O-[(3R)-3-hydroxyacyl]-N-acetyl-alpha-D-glucosamine + H2O = a UDP-3-O-[(3R)-3-hydroxyacyl]-alpha-D-glucosamine + acetate. The protein operates within glycolipid biosynthesis; lipid IV(A) biosynthesis; lipid IV(A) from (3R)-3-hydroxytetradecanoyl-[acyl-carrier-protein] and UDP-N-acetyl-alpha-D-glucosamine: step 2/6. Its function is as follows. Catalyzes the hydrolysis of UDP-3-O-myristoyl-N-acetylglucosamine to form UDP-3-O-myristoylglucosamine and acetate, the committed step in lipid A biosynthesis. The protein is UDP-3-O-acyl-N-acetylglucosamine deacetylase of Azoarcus sp. (strain BH72).